We begin with the raw amino-acid sequence, 192 residues long: MLKKTLLSLTAVSMLASAGSALAAEYKFDKEGQHAFIEFRIKHLGYSWLYGSFNDFDGAFTFDEKNPSADKVNVTINTNSVDTNHAERDKHLRSAEFLNVTKHPQATFTSTEVKKDGEDYDITGNLTLNGVTKPVKLDAKLIGQGDDPWGNYRAGFQAEGTIKLKDFNITTDLGPASQEVELIIAVEGVRQK.

A signal peptide spans 1 to 23 (MLKKTLLSLTAVSMLASAGSALA).

Belongs to the UPF0312 family. Type 1 subfamily.

It is found in the periplasm. The polypeptide is UPF0312 protein PC1_2518 (Pectobacterium carotovorum subsp. carotovorum (strain PC1)).